The sequence spans 227 residues: Apoptosis regulator OPG045 (227 aa).

Belongs to the orthopoxvirus OPG045 family. Homodimer. Interacts with host pro-apoptotic protein BCL2L11 (via BH3 domain). Interacts with host NLRP1. Interacts with host BAK.

The protein localises to the host mitochondrion outer membrane. The protein resides in the host cytoplasm. Plays a role in evading host innate immune response by inhibiting host inflammasome activation. Interacts with and inhibits NLR-mediated interleukin-1 beta/IL1B production in infected cells. At the host mitochondria outer membrane, interacts with the BH3 domain of host BAK and prevents BAK from binding active BAX. In turn, host apoptosis is inhibited. In Oryctolagus cuniculus (Rabbit), this protein is Apoptosis regulator OPG045 (OPG045).